Here is a 224-residue protein sequence, read N- to C-terminus: UPF0758 protein PBPRA0202 (224 aa).

Residues 102 to 224 (VLTSPQHTRH…IVSFSEQGWL (123 aa)) form the MPN domain. 3 residues coordinate Zn(2+): H173, H175, and D186. Residues 173–186 (HNHPSGVAEPSQSD) carry the JAMM motif motif.

This sequence belongs to the UPF0758 family.

This is UPF0758 protein PBPRA0202 from Photobacterium profundum (strain SS9).